The sequence spans 303 residues: Coenzyme PQQ synthesis protein B (303 aa).

This sequence belongs to the PqqB family.

The protein operates within cofactor biosynthesis; pyrroloquinoline quinone biosynthesis. Its function is as follows. May be involved in the transport of PQQ or its precursor to the periplasm. This Pseudomonas syringae pv. syringae (strain B728a) protein is Coenzyme PQQ synthesis protein B.